Here is a 126-residue protein sequence, read N- to C-terminus: Large ribosomal subunit protein bL12 (126 aa).

Belongs to the bacterial ribosomal protein bL12 family. In terms of assembly, homodimer. Part of the ribosomal stalk of the 50S ribosomal subunit. Forms a multimeric L10(L12)X complex, where L10 forms an elongated spine to which 2 to 4 L12 dimers bind in a sequential fashion. Binds GTP-bound translation factors.

In terms of biological role, forms part of the ribosomal stalk which helps the ribosome interact with GTP-bound translation factors. Is thus essential for accurate translation. This is Large ribosomal subunit protein bL12 from Acidovorax sp. (strain JS42).